A 60-amino-acid chain; its full sequence is Small integral membrane protein 3 (60 aa).

A helical transmembrane segment spans residues 20-40 (IWVIVLIILATIVIMTSLLLC).

It is found in the membrane. The chain is Small integral membrane protein 3 (SMIM3) from Homo sapiens (Human).